Here is a 248-residue protein sequence, read N- to C-terminus: UPF0280 protein Maeo_0343 (248 aa).

The protein belongs to the UPF0280 family.

The sequence is that of UPF0280 protein Maeo_0343 from Methanococcus aeolicus (strain ATCC BAA-1280 / DSM 17508 / OCM 812 / Nankai-3).